Consider the following 778-residue polypeptide: Lon protease (778 aa).

One can recognise a Lon N-terminal domain in the interval 6 to 207 (LPLMALRDMV…TVISMLNSNI (202 aa)). 356-363 (GPPGVGKT) lines the ATP pocket. The Lon proteolytic domain occupies 592–773 (EDQIGSTTGL…DQVLKHALVG (182 aa)). Catalysis depends on residues Ser679 and Lys722.

This sequence belongs to the peptidase S16 family. As to quaternary structure, homohexamer. Organized in a ring with a central cavity.

It is found in the cytoplasm. The catalysed reaction is Hydrolysis of proteins in presence of ATP.. ATP-dependent serine protease that mediates the selective degradation of mutant and abnormal proteins as well as certain short-lived regulatory proteins. Required for cellular homeostasis and for survival from DNA damage and developmental changes induced by stress. Degrades polypeptides processively to yield small peptide fragments that are 5 to 10 amino acids long. Binds to DNA in a double-stranded, site-specific manner. This chain is Lon protease, found in Rickettsia conorii (strain ATCC VR-613 / Malish 7).